The following is a 152-amino-acid chain: Urease accessory protein UreE (152 aa).

The protein belongs to the UreE family.

The protein localises to the cytoplasm. Involved in urease metallocenter assembly. Binds nickel. Probably functions as a nickel donor during metallocenter assembly. The sequence is that of Urease accessory protein UreE from Enterobacter sp. (strain 638).